A 434-amino-acid polypeptide reads, in one-letter code: ATP-dependent protease ATPase subunit HslU (434 aa).

Residues V18, 60–65 (GVGKTE), D247, E312, and R384 contribute to the ATP site.

Belongs to the ClpX chaperone family. HslU subfamily. A double ring-shaped homohexamer of HslV is capped on each side by a ring-shaped HslU homohexamer. The assembly of the HslU/HslV complex is dependent on binding of ATP.

The protein localises to the cytoplasm. In terms of biological role, ATPase subunit of a proteasome-like degradation complex; this subunit has chaperone activity. The binding of ATP and its subsequent hydrolysis by HslU are essential for unfolding of protein substrates subsequently hydrolyzed by HslV. HslU recognizes the N-terminal part of its protein substrates and unfolds these before they are guided to HslV for hydrolysis. This is ATP-dependent protease ATPase subunit HslU from Rhodopseudomonas palustris (strain BisB18).